The chain runs to 285 residues: MTALLIDGNALSKTLRAQAAERAAALTARGHRPGLAVILVGDNPASEVYVRNKIKACEDNGFFSQKDTYPATLSEADLLARIDELNRDPKIHGILVQLPLPAHIDSHKVIEAIAPEKDVDGFHVANAGALMTGKPLFRPCTPYGVMKMFAAHGIALQGANAVVIGRSNIVGKPMAMLLLEAGATVTICHSKTRDLAAHTRQADIIVAAVGKRNILTADMVKPGATVIDVGMNRDDAGKLCGDVDFAGVKEVAGYITPVPGGVGPMTITMLLINTLESAERAAAAA.

Residues 165–167 and Ser190 contribute to the NADP(+) site; that span reads GRS.

It belongs to the tetrahydrofolate dehydrogenase/cyclohydrolase family. Homodimer.

The enzyme catalyses (6R)-5,10-methylene-5,6,7,8-tetrahydrofolate + NADP(+) = (6R)-5,10-methenyltetrahydrofolate + NADPH. It carries out the reaction (6R)-5,10-methenyltetrahydrofolate + H2O = (6R)-10-formyltetrahydrofolate + H(+). It participates in one-carbon metabolism; tetrahydrofolate interconversion. In terms of biological role, catalyzes the oxidation of 5,10-methylenetetrahydrofolate to 5,10-methenyltetrahydrofolate and then the hydrolysis of 5,10-methenyltetrahydrofolate to 10-formyltetrahydrofolate. The protein is Bifunctional protein FolD of Burkholderia multivorans (strain ATCC 17616 / 249).